The sequence spans 412 residues: Heme chaperone HemW (412 aa).

Residues 4–241 enclose the Radical SAM core domain; sequence GTYLMPTAAY…RHGQEVLTQA (238 aa). S-adenosyl-L-methionine is bound at residue Tyr-13. Residues Cys-19, Cys-23, and Cys-26 each contribute to the [2Fe-2S] cluster site. S-adenosyl-L-methionine contacts are provided by residues Gly-72, 73–74, Glu-105, Gln-132, Arg-144, and Asp-169; that span reads GT.

It belongs to the anaerobic coproporphyrinogen-III oxidase family. HemW subfamily. [4Fe-4S] cluster serves as cofactor.

The protein resides in the cytoplasm. Functionally, probably acts as a heme chaperone, transferring heme to an unknown acceptor. Binds one molecule of heme per monomer, possibly covalently. Binds 1 [2Fe-2S] cluster. Although this protein has sequence motifs typically found in proteins binding the [4Fe-4S]-AdoMet radical-SAM cluster and S-adenosylmethionine, spectroscopic evidence suggests that a [2Fe-2S] cluster is present; S-adenosylmethionine was not detected. Has no detectable coproporphyrinogen-III oxidase activity. The chain is Heme chaperone HemW from Synechocystis sp. (strain ATCC 27184 / PCC 6803 / Kazusa).